Here is an 81-residue protein sequence, read N- to C-terminus: Anaphase-promoting complex subunit emb-1 (81 aa).

In terms of assembly, the APC/C is probably composed of at least 12 subunits: apc-2, apc-10, apc-11, cdc-26, emb-1, emb-27, emb-30, mat-1, mat-2, mat-3, such-1 and gfi-3. Expressed in germ cells.

The protein operates within protein modification; protein ubiquitination. Its function is as follows. Probable component of the anaphase promoting complex/cyclosome (APC/C), a cell cycle-regulated E3 ubiquitin ligase that controls progression through mitosis and the G1 phase of the cell cycle. The APC/C complex acts by mediating ubiquitination and subsequent degradation of target proteins. Developmental role in early embryogenesis and the metaphase to anaphase transition in meiosis and mitosis. May be required for germline proliferation. Required for male tail development and hermaphrodite vulva formation. The protein is Anaphase-promoting complex subunit emb-1 of Caenorhabditis elegans.